The following is an 868-amino-acid chain: LPS-assembly protein LptD (868 aa).

The first 24 residues, methionine 1–alanine 24, serve as a signal peptide directing secretion.

This sequence belongs to the LptD family. In terms of assembly, component of the lipopolysaccharide transport and assembly complex. Interacts with LptE and LptA.

The protein resides in the cell outer membrane. Functionally, together with LptE, is involved in the assembly of lipopolysaccharide (LPS) at the surface of the outer membrane. The protein is LPS-assembly protein LptD of Francisella tularensis subsp. tularensis (strain FSC 198).